A 331-amino-acid polypeptide reads, in one-letter code: Holliday junction branch migration complex subunit RuvB (331 aa).

The large ATPase domain (RuvB-L) stretch occupies residues 1–182 (MDDRMVDQAL…FGVHLRLEYY (182 aa)). ATP contacts are provided by residues Leu21, Arg22, Gly63, Lys66, Thr67, Thr68, 129–131 (EDF), Arg172, Tyr182, and Arg219. Thr67 is a Mg(2+) binding site. The interval 183–253 (NENDLKEIII…TTKQALQLLQ (71 aa)) is small ATPAse domain (RuvB-S). The segment at 256–331 (AEGLDYIDHK…AYEHFKNFNK (76 aa)) is head domain (RuvB-H). DNA is bound by residues Arg292, Arg311, and Arg316.

This sequence belongs to the RuvB family. As to quaternary structure, homohexamer. Forms an RuvA(8)-RuvB(12)-Holliday junction (HJ) complex. HJ DNA is sandwiched between 2 RuvA tetramers; dsDNA enters through RuvA and exits via RuvB. An RuvB hexamer assembles on each DNA strand where it exits the tetramer. Each RuvB hexamer is contacted by two RuvA subunits (via domain III) on 2 adjacent RuvB subunits; this complex drives branch migration. In the full resolvosome a probable DNA-RuvA(4)-RuvB(12)-RuvC(2) complex forms which resolves the HJ.

It localises to the cytoplasm. The catalysed reaction is ATP + H2O = ADP + phosphate + H(+). In terms of biological role, the RuvA-RuvB-RuvC complex processes Holliday junction (HJ) DNA during genetic recombination and DNA repair, while the RuvA-RuvB complex plays an important role in the rescue of blocked DNA replication forks via replication fork reversal (RFR). RuvA specifically binds to HJ cruciform DNA, conferring on it an open structure. The RuvB hexamer acts as an ATP-dependent pump, pulling dsDNA into and through the RuvAB complex. RuvB forms 2 homohexamers on either side of HJ DNA bound by 1 or 2 RuvA tetramers; 4 subunits per hexamer contact DNA at a time. Coordinated motions by a converter formed by DNA-disengaged RuvB subunits stimulates ATP hydrolysis and nucleotide exchange. Immobilization of the converter enables RuvB to convert the ATP-contained energy into a lever motion, pulling 2 nucleotides of DNA out of the RuvA tetramer per ATP hydrolyzed, thus driving DNA branch migration. The RuvB motors rotate together with the DNA substrate, which together with the progressing nucleotide cycle form the mechanistic basis for DNA recombination by continuous HJ branch migration. Branch migration allows RuvC to scan DNA until it finds its consensus sequence, where it cleaves and resolves cruciform DNA. This chain is Holliday junction branch migration complex subunit RuvB, found in Staphylococcus haemolyticus (strain JCSC1435).